A 204-amino-acid chain; its full sequence is Apoptosis regulator R11 (204 aa).

Positions 101 to 120 match the BH1 motif; that stretch reads ELFRDGTNWGRIVAFFSFGR. The BH2 motif lies at 152–167; the sequence is PWMQENGGWEAFVGLY. The chain crosses the membrane as a helical span at residues 181 to 198; it reads RFGRLLTIVMLTGVFALV.

It belongs to the Bcl-2 family.

It is found in the membrane. Confers strong protection against cell death. This chain is Apoptosis regulator R11, found in Xenopus laevis (African clawed frog).